We begin with the raw amino-acid sequence, 336 residues long: HTH-type transcriptional repressor PurR (336 aa).

The region spanning 2-56 (ATIKDVARLAGVSTTTVSHVINKTRFVAETTQEKVMEAVKQLNYAPSAVARSLKC) is the HTH lacI-type domain. Residues 4 to 23 (IKDVARLAGVSTTTVSHVIN) constitute a DNA-binding region (H-T-H motif). Residues 48–56 (SAVARSLKC) mediate DNA binding. 4 residues coordinate hypoxanthine: phenylalanine 73, lysine 189, phenylalanine 220, and aspartate 274.

In terms of assembly, homodimer.

Its pathway is purine metabolism; purine nucleotide biosynthesis [regulation]. In terms of biological role, is the main repressor of the genes involved in the de novo synthesis of purine nucleotides, regulating purB, purC, purEK, purF, purHD, purL, purMN and guaBA expression. PurR is allosterically activated to bind its cognate DNA by binding the purine corepressors, hypoxanthine or guanine, thereby effecting transcription repression. The chain is HTH-type transcriptional repressor PurR from Vibrio cholerae serotype O1 (strain ATCC 39315 / El Tor Inaba N16961).